A 328-amino-acid chain; its full sequence is Biotin synthase (328 aa).

Residues 48 to 275 (NRIQLSKLLN…KSHVRLTAGR (228 aa)) form the Radical SAM core domain. Cys-63, Cys-67, and Cys-70 together coordinate [4Fe-4S] cluster. [2Fe-2S] cluster is bound by residues Cys-107, Cys-138, Cys-198, and Arg-270.

Belongs to the radical SAM superfamily. Biotin synthase family. As to quaternary structure, homodimer. It depends on [4Fe-4S] cluster as a cofactor. Requires [2Fe-2S] cluster as cofactor.

It catalyses the reaction (4R,5S)-dethiobiotin + (sulfur carrier)-SH + 2 reduced [2Fe-2S]-[ferredoxin] + 2 S-adenosyl-L-methionine = (sulfur carrier)-H + biotin + 2 5'-deoxyadenosine + 2 L-methionine + 2 oxidized [2Fe-2S]-[ferredoxin]. Its pathway is cofactor biosynthesis; biotin biosynthesis; biotin from 7,8-diaminononanoate: step 2/2. In terms of biological role, catalyzes the conversion of dethiobiotin (DTB) to biotin by the insertion of a sulfur atom into dethiobiotin via a radical-based mechanism. In Brucella ovis (strain ATCC 25840 / 63/290 / NCTC 10512), this protein is Biotin synthase.